A 586-amino-acid chain; its full sequence is CTP synthase 2 (586 aa).

The region spanning 300-554 (SIALVGKYTK…LAATGTLNTH (255 aa)) is the Glutamine amidotransferase type-1 domain. Active-site for GATase activity residues include cysteine 399, histidine 526, and glutamate 528. Phosphoserine is present on residues serine 568, serine 571, and serine 574.

The protein belongs to the CTP synthase family.

The enzyme catalyses UTP + L-glutamine + ATP + H2O = CTP + L-glutamate + ADP + phosphate + 2 H(+). It functions in the pathway pyrimidine metabolism; CTP biosynthesis via de novo pathway; CTP from UDP: step 2/2. Catalyzes the ATP-dependent amination of UTP to CTP with either L-glutamine or ammonia as the source of nitrogen. Constitutes the rate-limiting enzyme in the synthesis of cytosine nucleotides. This is CTP synthase 2 (Ctps2) from Rattus norvegicus (Rat).